We begin with the raw amino-acid sequence, 252 residues long: Oncostatin-M (252 aa).

Positions 1-25 (MGVLLTQRTLLSLVLALLFPSMASM) are cleaved as a signal peptide. Disulfide bonds link cysteine 31/cysteine 152 and cysteine 74/cysteine 192. Asparagine 100 is a glycosylation site (N-linked (GlcNAc...) asparagine). Disordered stretches follow at residues 162 to 184 (TAEP…ASDA) and 213 to 252 (GESP…QLPR). N-linked (GlcNAc...) asparagine glycosylation occurs at asparagine 217. The span at 218–245 (RSRRHSPHQALRKGVRRTRPSRKGKRLM) shows a compositional bias: basic residues. The propeptide occupies 222 to 252 (HSPHQALRKGVRRTRPSRKGKRLMTRGQLPR).

This sequence belongs to the LIF/OSM family. In terms of processing, propeptide processing is not important for receptor binding activity but may be important growth-inhibitory activity.

It localises to the secreted. Its function is as follows. Growth regulator. Inhibits the proliferation of a number of tumor cell lines. Stimulates proliferation of AIDS-KS cells. It regulates cytokine production, including IL-6, G-CSF and GM-CSF from endothelial cells. Uses both type I OSM receptor (heterodimers composed of LIFR and IL6ST) and type II OSM receptor (heterodimers composed of OSMR and IL6ST). Involved in the maturation of fetal hepatocytes, thereby promoting liver development and regeneration. This Homo sapiens (Human) protein is Oncostatin-M (OSM).